A 402-amino-acid chain; its full sequence is Imidazolonepropionase (402 aa).

The Fe(3+) site is built by histidine 66 and histidine 68. Histidine 66 and histidine 68 together coordinate Zn(2+). Residues arginine 75, tyrosine 138, and histidine 171 each coordinate 4-imidazolone-5-propanoate. Tyrosine 138 is a binding site for N-formimidoyl-L-glutamate. A Fe(3+)-binding site is contributed by histidine 236. Histidine 236 provides a ligand contact to Zn(2+). Glutamine 239 contributes to the 4-imidazolone-5-propanoate binding site. Aspartate 311 contributes to the Fe(3+) binding site. Aspartate 311 contributes to the Zn(2+) binding site. Residues asparagine 313 and glycine 315 each coordinate N-formimidoyl-L-glutamate. Threonine 316 contacts 4-imidazolone-5-propanoate.

It belongs to the metallo-dependent hydrolases superfamily. HutI family. Requires Zn(2+) as cofactor. The cofactor is Fe(3+).

It localises to the cytoplasm. It carries out the reaction 4-imidazolone-5-propanoate + H2O = N-formimidoyl-L-glutamate. It participates in amino-acid degradation; L-histidine degradation into L-glutamate; N-formimidoyl-L-glutamate from L-histidine: step 3/3. Functionally, catalyzes the hydrolytic cleavage of the carbon-nitrogen bond in imidazolone-5-propanoate to yield N-formimidoyl-L-glutamate. It is the third step in the universal histidine degradation pathway. In Pseudomonas aeruginosa (strain LESB58), this protein is Imidazolonepropionase.